A 96-amino-acid polypeptide reads, in one-letter code: Co-chaperonin GroES (96 aa).

The protein belongs to the GroES chaperonin family. As to quaternary structure, heptamer of 7 subunits arranged in a ring. Interacts with the chaperonin GroEL.

The protein resides in the cytoplasm. Its function is as follows. Together with the chaperonin GroEL, plays an essential role in assisting protein folding. The GroEL-GroES system forms a nano-cage that allows encapsulation of the non-native substrate proteins and provides a physical environment optimized to promote and accelerate protein folding. GroES binds to the apical surface of the GroEL ring, thereby capping the opening of the GroEL channel. This chain is Co-chaperonin GroES, found in Nitrosococcus oceani (strain ATCC 19707 / BCRC 17464 / JCM 30415 / NCIMB 11848 / C-107).